The chain runs to 218 residues: Glutathione S-transferase Mu 1 (218 aa).

Positions 2-88 (PMTLGYWDVR…YLARKHGLCG (87 aa)) constitute a GST N-terminal domain. Residues 7–8 (YW), 46–50 (WLSEK), 59–60 (NL), and 72–73 (QS) each bind glutathione. The 119-residue stretch at 90 to 208 (TEEERIRVDI…KSSRFIRVPV (119 aa)) folds into the GST C-terminal domain. Residue Tyr-116 participates in substrate binding.

It belongs to the GST superfamily. Mu family. In terms of assembly, homodimer. As to expression, well expressed in rabbit liver, brain and kidney.

Its subcellular location is the cytoplasm. It carries out the reaction RX + glutathione = an S-substituted glutathione + a halide anion + H(+). Functionally, conjugation of reduced glutathione to a wide number of exogenous and endogenous hydrophobic electrophiles. The polypeptide is Glutathione S-transferase Mu 1 (Oryctolagus cuniculus (Rabbit)).